We begin with the raw amino-acid sequence, 544 residues long: MADTNPNAPPRSDSLLNPADALKYLEEYPRGDGLSLQELMDSRKNGGLTYNDFLVLPGHISFPASDVSLQSRATKNIVLNTPFLSSPMDTVTEDRMAIALALHGGLGIIHHNCSAEEQAAMVRRVKKYENGFITDPLCLGPDATVGDVLEIKAKFGFCGVPITETGAPNSKLLGIVTGRDVQFQDAETPIKSVMTTEVVTGSSPITLEKANSLLRETKKGKLPIVDSNGHLVSLVARSDLLKNQNYPYASKVPESKQLYCGAAIGTRPGDKDRLKLLAEAGLDVVVLDSSQGDSVYQIEFIKWIKQTYPKIEIIAGNVVTREQAAQLIAAGADGLRIGMGSGSICITQEVMAVGRPQGTAVYAVAEFASRFGIPCIADGGIGNIGHIAKALALGASAVMMGGLLAGTTESPGEYFYHEGKRVKVYRGMGSIEAMEHTQRGSASGKRSILNLDNAATARYFSEADAVKVAQGVSGDVADKGSINKFVPYLFTGLQHSFQDAGVKSVSELHSCARSGSLRFELRTASAQLEGGVHGLNSYTKRLFA.

CBS domains are found at residues F132–S192 and M194–S250. NAD(+)-binding positions include D288 to S290 and G338 to G340. Residues G340 and G342 each contribute to the K(+) site. An IMP-binding site is contributed by S343. K(+) is bound at residue C345. C345 serves as the catalytic Thioimidate intermediate. IMP contacts are provided by residues D378 to G380, G401 to G402, and Y425 to G429. Residue R458 is the Proton acceptor of the active site. Residue Q470 participates in IMP binding. The K(+) site is built by E529, G530, and G531.

This sequence belongs to the IMPDH/GMPR family. In terms of assembly, homotetramer. The cofactor is K(+).

It is found in the cytoplasm. The catalysed reaction is IMP + NAD(+) + H2O = XMP + NADH + H(+). Its pathway is purine metabolism; XMP biosynthesis via de novo pathway; XMP from IMP: step 1/1. Mycophenolic acid (MPA) is a non-competitive inhibitor that prevents formation of the closed enzyme conformation by binding to the same site as the amobile flap. In contrast, mizoribine monophosphate (MZP) is a competitive inhibitor that induces the closed conformation. MPA is a potent inhibitor of mammalian IMPDHs but a poor inhibitor of the bacterial enzymes. MZP is a more potent inhibitor of bacterial IMPDH. Functionally, catalyzes the conversion of inosine 5'-phosphate (IMP) to xanthosine 5'-phosphate (XMP), the first committed and rate-limiting step in the de novo synthesis of guanine nucleotides, and therefore plays an important role in the regulation of cell growth. In Cryptococcus neoformans var. neoformans serotype D (strain JEC21 / ATCC MYA-565) (Filobasidiella neoformans), this protein is Inosine-5'-monophosphate dehydrogenase.